A 186-amino-acid polypeptide reads, in one-letter code: MLDAANYTPRLKAQYAETIRAALKEEFGYKNDMMIPKLEKIVLNIGCGAEAVKDSKKAKSAQEDLSKIAGQKAITTTAKKSIAGFRVREDMPMGAKVTLRGERMYEFLDRLITIAMPRIRDFRGVKPSFDGRGNFAMGIKEHIVFPEIDFDKVDEVWGMDIVIATTAKTDAEAKSLLKHFNMPFNA.

This sequence belongs to the universal ribosomal protein uL5 family. In terms of assembly, part of the 50S ribosomal subunit; part of the 5S rRNA/L5/L18/L25 subcomplex. Contacts the 5S rRNA and the P site tRNA. Forms a bridge to the 30S subunit in the 70S ribosome.

In terms of biological role, this is one of the proteins that bind and probably mediate the attachment of the 5S RNA into the large ribosomal subunit, where it forms part of the central protuberance. In the 70S ribosome it contacts protein S13 of the 30S subunit (bridge B1b), connecting the 2 subunits; this bridge is implicated in subunit movement. Contacts the P site tRNA; the 5S rRNA and some of its associated proteins might help stabilize positioning of ribosome-bound tRNAs. This Ruegeria pomeroyi (strain ATCC 700808 / DSM 15171 / DSS-3) (Silicibacter pomeroyi) protein is Large ribosomal subunit protein uL5.